Reading from the N-terminus, the 125-residue chain is Type-4 ice-structuring protein (125 aa).

The first 20 residues, 1–20 (MKYTLIAAIVVLALAQGTLA), serve as a signal peptide directing secretion.

This sequence belongs to the apolipoprotein A1/A4/E family.

It is found in the secreted. Functionally, antifreeze proteins lower the blood freezing point. This Gadus morhua (Atlantic cod) protein is Type-4 ice-structuring protein.